The primary structure comprises 332 residues: Phenol 2-monooxygenase, oxygenase component MhpL (332 aa).

The protein belongs to the TmoE/XamoE family.

It catalyses the reaction phenol + NADH + O2 + H(+) = catechol + NAD(+) + H2O. It participates in aromatic compound metabolism; phenol degradation. Its function is as follows. Part of a multicomponent enzyme which catalyzes the degradation of phenol and some of its methylated derivatives. This Acinetobacter pittii (strain PHEA-2) protein is Phenol 2-monooxygenase, oxygenase component MhpL (mphL).